We begin with the raw amino-acid sequence, 486 residues long: Aspartyl/glutamyl-tRNA(Asn/Gln) amidotransferase subunit B (486 aa).

Belongs to the GatB/GatE family. GatB subfamily. In terms of assembly, heterotrimer of A, B and C subunits.

The catalysed reaction is L-glutamyl-tRNA(Gln) + L-glutamine + ATP + H2O = L-glutaminyl-tRNA(Gln) + L-glutamate + ADP + phosphate + H(+). The enzyme catalyses L-aspartyl-tRNA(Asn) + L-glutamine + ATP + H2O = L-asparaginyl-tRNA(Asn) + L-glutamate + ADP + phosphate + 2 H(+). Functionally, allows the formation of correctly charged Asn-tRNA(Asn) or Gln-tRNA(Gln) through the transamidation of misacylated Asp-tRNA(Asn) or Glu-tRNA(Gln) in organisms which lack either or both of asparaginyl-tRNA or glutaminyl-tRNA synthetases. The reaction takes place in the presence of glutamine and ATP through an activated phospho-Asp-tRNA(Asn) or phospho-Glu-tRNA(Gln). The chain is Aspartyl/glutamyl-tRNA(Asn/Gln) amidotransferase subunit B from Herminiimonas arsenicoxydans.